Consider the following 105-residue polypeptide: Met repressor (105 aa).

It belongs to the MetJ family. As to quaternary structure, homodimer.

It is found in the cytoplasm. In terms of biological role, this regulatory protein, when combined with SAM (S-adenosylmethionine) represses the expression of the methionine regulon and of enzymes involved in SAM synthesis. This Vibrio cholerae serotype O1 (strain ATCC 39541 / Classical Ogawa 395 / O395) protein is Met repressor.